The following is a 116-amino-acid chain: Large ribosomal subunit protein bL17 (116 aa).

Belongs to the bacterial ribosomal protein bL17 family. In terms of assembly, part of the 50S ribosomal subunit. Contacts protein L32.

This Sulfurovum sp. (strain NBC37-1) protein is Large ribosomal subunit protein bL17.